A 666-amino-acid polypeptide reads, in one-letter code: ATP-dependent RNA helicase DDX51 (666 aa).

A2 is subject to N-acetylalanine. A disordered region spans residues 9–152 (YPGPDAAAAA…AAPDGPALEE (144 aa)). A compositionally biased stretch (low complexity) spans 10 to 28 (PGPDAAAAAGPEGAEAGAH). Residues 33 to 48 (ALLERLQSRARERQQQ) show a composition bias toward basic and acidic residues. Residues 49–58 (REPAQTEAAA) are compositionally biased toward low complexity. The segment covering 65 to 75 (RRRRRPRRRRR) has biased composition (basic residues). Phosphoserine occurs at positions 83 and 103. Positions 97-108 (EDAGAESNEEAP) are enriched in acidic residues. A Q motif motif is present at residues 221 to 229 (YFPVQAAVI). The Helicase ATP-binding domain maps to 243-452 (GRGGYRPSDL…QLGLHQPRLF (210 aa)). Residue 256 to 263 (APTGSGKT) coordinates ATP. A DEAD box motif is present at residues 371 to 374 (DEAD). Residues 494–640 (VVLHLVLEMG…RHELSSKLLQ (147 aa)) enclose the Helicase C-terminal domain.

The protein belongs to the DEAD box helicase family. DDX51/DBP6 subfamily.

Its subcellular location is the nucleus. It is found in the nucleolus. It catalyses the reaction ATP + H2O = ADP + phosphate + H(+). In terms of biological role, ATP-binding RNA helicase involved in the biogenesis of 60S ribosomal subunits. The sequence is that of ATP-dependent RNA helicase DDX51 (DDX51) from Homo sapiens (Human).